We begin with the raw amino-acid sequence, 151 residues long: UPF0178 protein Hhal_1913 (151 aa).

This sequence belongs to the UPF0178 family.

This chain is UPF0178 protein Hhal_1913, found in Halorhodospira halophila (strain DSM 244 / SL1) (Ectothiorhodospira halophila (strain DSM 244 / SL1)).